The sequence spans 174 residues: Large ribosomal subunit protein uL10 (174 aa).

The protein belongs to the universal ribosomal protein uL10 family. As to quaternary structure, part of the ribosomal stalk of the 50S ribosomal subunit. The N-terminus interacts with L11 and the large rRNA to form the base of the stalk. The C-terminus forms an elongated spine to which L12 dimers bind in a sequential fashion forming a multimeric L10(L12)X complex.

Forms part of the ribosomal stalk, playing a central role in the interaction of the ribosome with GTP-bound translation factors. This chain is Large ribosomal subunit protein uL10, found in Methylobacillus flagellatus (strain ATCC 51484 / DSM 6875 / VKM B-1610 / KT).